We begin with the raw amino-acid sequence, 469 residues long: Squamosa promoter-binding-like protein 3 (469 aa).

A disordered region spans residues 96-118 (SAEEHDKNMDKGKSKVDDTGTSR). Residues 97-115 (AEEHDKNMDKGKSKVDDTG) show a composition bias toward basic and acidic residues. Residues 179-256 (NPHCQVEGCN…HDHNARRRKP (78 aa)) form an SBP-type zinc finger. Cys182, Cys187, Cys204, His207, Cys223, Cys226, His230, and Cys242 together coordinate Zn(2+). The Bipartite nuclear localization signal motif lies at 239-255 (KRSCRRRLHDHNARRRK). The disordered stretch occupies residues 446 to 469 (NDDDEDHLQLPKPSYDNSHYDQMN). Residues 460–469 (YDNSHYDQMN) are compositionally biased toward polar residues.

As to expression, ubiquitous.

Its subcellular location is the nucleus. Trans-acting factor that binds specifically to the consensus nucleotide sequence 5'-TNCGTACAA-3'. May be involved in panicle development. The sequence is that of Squamosa promoter-binding-like protein 3 (SPL3) from Oryza sativa subsp. indica (Rice).